The sequence spans 199 residues: Probable adenylyl-sulfate kinase (199 aa).

34-41 (GLSGSGKS) contacts ATP. Catalysis depends on Ser108, which acts as the Phosphoserine intermediate.

Belongs to the APS kinase family.

It carries out the reaction adenosine 5'-phosphosulfate + ATP = 3'-phosphoadenylyl sulfate + ADP + H(+). The protein operates within sulfur metabolism; hydrogen sulfide biosynthesis; sulfite from sulfate: step 2/3. Catalyzes the synthesis of activated sulfate. This chain is Probable adenylyl-sulfate kinase (yisZ), found in Bacillus subtilis (strain 168).